A 338-amino-acid chain; its full sequence is Solute carrier family 35 member G5 (338 aa).

The segment at M1–W27 is disordered. A run of 9 helical transmembrane segments spans residues T37–L57, L67–L87, G102–V122, C160–L180, T190–Y210, T221–L241, L250–V270, L281–L301, and V305–A325. The EamA 1 domain maps to L49–G174. The region spanning Y272–A325 is the EamA 2 domain.

This sequence belongs to the SLC35G solute transporter family. As to expression, expressed in placenta and testis.

It localises to the membrane. The sequence is that of Solute carrier family 35 member G5 (SLC35G5) from Homo sapiens (Human).